Reading from the N-terminus, the 353-residue chain is Guanine nucleotide-binding protein subunit alpha (353 aa).

The segment at 1–25 (MGCGMSTEDKEGKARNEEIENQLKR) is disordered. G2 is lipidated: N-myristoyl glycine. C3 is lipidated: S-palmitoyl cysteine. A compositionally biased stretch (basic and acidic residues) spans 7–25 (TEDKEGKARNEEIENQLKR). The region spanning 32-353 (NEIKMLLLGA…QENLRLCGLI (322 aa)) is the G-alpha domain. Residues 35–48 (KMLLLGAGESGKST) are G1 motif. Residues E43, S44, G45, K46, S47, T48, D150, L175, T181, G203, N269, K270, D272, and A325 each coordinate GTP. S47 serves as a coordination point for Mg(2+). The tract at residues 173 to 181 (DVLRSRVKT) is G2 motif. T181 contributes to the Mg(2+) binding site. The interval 196-205 (YRMFDVGGQR) is G3 motif. Residues 265-272 (ILFLNKID) form a G4 motif region. Residues 323 to 328 (TCATDT) form a G5 motif region.

It belongs to the G-alpha family. G(q) subfamily. G proteins are composed of 3 units; alpha, beta and gamma. The alpha chain contains the guanine nucleotide binding site. The cofactor is Mg(2+).

Guanine nucleotide-binding proteins (G proteins) are involved as modulators or transducers in various transmembrane signaling systems. The polypeptide is Guanine nucleotide-binding protein subunit alpha (CTG1) (Colletotrichum trifolii).